A 251-amino-acid chain; its full sequence is GTP cyclohydrolase 1 type 2 homolog (251 aa).

A divalent metal cation is bound by residues His-64, His-65, Asp-102, His-219, and Glu-223.

Belongs to the GTP cyclohydrolase I type 2/NIF3 family. As to quaternary structure, homohexamer.

The protein is GTP cyclohydrolase 1 type 2 homolog of Chlamydia pneumoniae (Chlamydophila pneumoniae).